Reading from the N-terminus, the 308-residue chain is tRNA dimethylallyltransferase (308 aa).

14–21 is an ATP binding site; it reads GPTASGKT. Residue 16–21 participates in substrate binding; it reads TASGKT. Interaction with substrate tRNA regions lie at residues 39–42, 163–167, and 244–249; these read DSAL, QRLSR, and RCVGYR.

It belongs to the IPP transferase family. In terms of assembly, monomer. The cofactor is Mg(2+).

The catalysed reaction is adenosine(37) in tRNA + dimethylallyl diphosphate = N(6)-dimethylallyladenosine(37) in tRNA + diphosphate. In terms of biological role, catalyzes the transfer of a dimethylallyl group onto the adenine at position 37 in tRNAs that read codons beginning with uridine, leading to the formation of N6-(dimethylallyl)adenosine (i(6)A). The chain is tRNA dimethylallyltransferase from Shewanella baltica (strain OS185).